Consider the following 112-residue polypeptide: Cytochrome c-551 (112 aa).

Residues 1–20 (MKSKLSILMIGFALSVLLAA) form the signal peptide. A lipid anchor (N-palmitoyl cysteine) is attached at cysteine 21. Cysteine 21 is lipidated: S-diacylglycerol cysteine. Positions 25-35 (DAKEEKTDTGS) are enriched in basic and acidic residues. A disordered region spans residues 25 to 44 (DAKEEKTDTGSKTEATASEG). One can recognise a Cytochrome c domain in the interval 39–112 (ATASEGEELY…VIAKWLSEKK (74 aa)). Positions 52, 55, 56, and 91 each coordinate heme c.

Binds 1 heme c group covalently per subunit.

The protein resides in the cell membrane. Electron carrier protein. In Bacillus subtilis (strain 168), this protein is Cytochrome c-551 (cccB).